Consider the following 97-residue polypeptide: Small ribosomal subunit protein bS20 (97 aa).

This sequence belongs to the bacterial ribosomal protein bS20 family.

Its function is as follows. Binds directly to 16S ribosomal RNA. The sequence is that of Small ribosomal subunit protein bS20 from Prochlorococcus marinus (strain MIT 9312).